The chain runs to 246 residues: Bis(5'-nucleosyl)-tetraphosphatase PrpE [asymmetrical] (246 aa).

The protein belongs to the PrpE family. Ni(2+) serves as cofactor.

The enzyme catalyses P(1),P(4)-bis(5'-guanosyl) tetraphosphate + H2O = GMP + GTP + 2 H(+). Its function is as follows. Asymmetrically hydrolyzes Ap4p to yield AMP and ATP. This is Bis(5'-nucleosyl)-tetraphosphatase PrpE [asymmetrical] from Bacillus anthracis (strain A0248).